The chain runs to 419 residues: Gamma-glutamyl phosphate reductase (419 aa).

This sequence belongs to the gamma-glutamyl phosphate reductase family.

The protein resides in the cytoplasm. The enzyme catalyses L-glutamate 5-semialdehyde + phosphate + NADP(+) = L-glutamyl 5-phosphate + NADPH + H(+). Its pathway is amino-acid biosynthesis; L-proline biosynthesis; L-glutamate 5-semialdehyde from L-glutamate: step 2/2. Catalyzes the NADPH-dependent reduction of L-glutamate 5-phosphate into L-glutamate 5-semialdehyde and phosphate. The product spontaneously undergoes cyclization to form 1-pyrroline-5-carboxylate. The sequence is that of Gamma-glutamyl phosphate reductase from Caldicellulosiruptor bescii (strain ATCC BAA-1888 / DSM 6725 / KCTC 15123 / Z-1320) (Anaerocellum thermophilum).